Consider the following 210-residue polypeptide: Probable peroxygenase 7 (210 aa).

Residues 1-24 (MSHQTVALASKAKSPKPKRGKLDK) form a disordered region. The region spanning 25 to 60 (EKMTALEKHVSFFDRNKDGTVYPWETYQGFRALGTG) is the EF-hand domain. Residue His-33 participates in heme binding. Asp-38, Asn-40, Asp-42, Thr-44, and Glu-49 together coordinate Ca(2+). The short motif at 81–90 (PGKGFSPLFP) is the Proline-knot element. Ser-188 carries the post-translational modification Phosphoserine.

Belongs to the caleosin family. Homodimer. The cofactor is heme b. Ca(2+) is required as a cofactor. Expressed in pollen coat.

Its subcellular location is the secreted. The enzyme catalyses RH + ROOH = ROH + ROH.. Functionally, probable calcium-binding peroxygenase. May be involved in pollination. The protein is Probable peroxygenase 7 (PXG7) of Arabidopsis thaliana (Mouse-ear cress).